The sequence spans 103 residues: Small ribosomal subunit protein uS10 (103 aa).

It belongs to the universal ribosomal protein uS10 family. As to quaternary structure, part of the 30S ribosomal subunit.

Its function is as follows. Involved in the binding of tRNA to the ribosomes. In Salinibacter ruber (strain DSM 13855 / M31), this protein is Small ribosomal subunit protein uS10.